The chain runs to 336 residues: Dihydroorotate dehydrogenase (quinone) (336 aa).

FMN is bound by residues 62–66 and Thr-86; that span reads AGLDK. Lys-66 provides a ligand contact to substrate. 111–115 provides a ligand contact to substrate; that stretch reads NRMGF. Asn-139 and Asn-172 together coordinate FMN. Asn-172 lines the substrate pocket. The active-site Nucleophile is Ser-175. Asn-177 is a binding site for substrate. FMN is bound by residues Lys-217 and Thr-245. A substrate-binding site is contributed by 246–247; that stretch reads NT. FMN is bound by residues Gly-268, Gly-297, and 318–319; that span reads YS.

This sequence belongs to the dihydroorotate dehydrogenase family. Type 2 subfamily. In terms of assembly, monomer. It depends on FMN as a cofactor.

The protein resides in the cell membrane. The catalysed reaction is (S)-dihydroorotate + a quinone = orotate + a quinol. It participates in pyrimidine metabolism; UMP biosynthesis via de novo pathway; orotate from (S)-dihydroorotate (quinone route): step 1/1. In terms of biological role, catalyzes the conversion of dihydroorotate to orotate with quinone as electron acceptor. The polypeptide is Dihydroorotate dehydrogenase (quinone) (Salmonella agona (strain SL483)).